The chain runs to 182 residues: MIFDEFTLKSQIRAVPDFPKPGVVFRDITPLFQSPRALRMTVDSFVQRYIEADFSHIGAMDARGFLIGSAVAYALNKPLVLFRKQGKLPADVLAEGYQTEYGEAFLEVHADSLCEGDSVLIFDDLIATGGTLLAAASLVRRLGARVFEAAAIIDLPELGGSTRLQDAGISTFSLTAFALDER.

It belongs to the purine/pyrimidine phosphoribosyltransferase family. Homodimer.

The protein resides in the cytoplasm. The catalysed reaction is AMP + diphosphate = 5-phospho-alpha-D-ribose 1-diphosphate + adenine. Its pathway is purine metabolism; AMP biosynthesis via salvage pathway; AMP from adenine: step 1/1. Functionally, catalyzes a salvage reaction resulting in the formation of AMP, that is energically less costly than de novo synthesis. This chain is Adenine phosphoribosyltransferase, found in Pseudomonas aeruginosa (strain LESB58).